The following is a 441-amino-acid chain: tRNA modification GTPase MnmE (441 aa).

The (6S)-5-formyl-5,6,7,8-tetrahydrofolate site is built by Arg21, Glu78, and Lys117. Positions 211–363 (GIVMTIVGKP…LENKIVSKVK (153 aa)) constitute a TrmE-type G domain. Residue Asn221 coordinates K(+). Residues 221 to 226 (NSGKST), 240 to 246 (TDIPGTT), and 265 to 268 (DTAG) contribute to the GTP site. A Mg(2+)-binding site is contributed by Ser225. Positions 240, 242, and 245 each coordinate K(+). Thr246 serves as a coordination point for Mg(2+). A (6S)-5-formyl-5,6,7,8-tetrahydrofolate-binding site is contributed by Lys441.

This sequence belongs to the TRAFAC class TrmE-Era-EngA-EngB-Septin-like GTPase superfamily. TrmE GTPase family. Homodimer. Heterotetramer of two MnmE and two MnmG subunits. Requires K(+) as cofactor.

Its subcellular location is the cytoplasm. In terms of biological role, exhibits a very high intrinsic GTPase hydrolysis rate. Involved in the addition of a carboxymethylaminomethyl (cmnm) group at the wobble position (U34) of certain tRNAs, forming tRNA-cmnm(5)s(2)U34. The chain is tRNA modification GTPase MnmE from Thermosipho melanesiensis (strain DSM 12029 / CIP 104789 / BI429).